Reading from the N-terminus, the 1028-residue chain is Sporulation-specific protein 3 (1028 aa).

It localises to the prospore membrane. In terms of biological role, has a role in spore morphogenesis. Involved in the assembly of the forespore membrane. This is Sporulation-specific protein 3 (spo3) from Schizosaccharomyces pombe (strain 972 / ATCC 24843) (Fission yeast).